The sequence spans 327 residues: Zinc finger protein 444 (327 aa).

The residue at position 1 (methionine 1) is an N-acetylmethionine. A Glycyl lysine isopeptide (Lys-Gly) (interchain with G-Cter in SUMO2) cross-link involves residue lysine 8. Residues serine 18 and serine 104 each carry the phosphoserine modification. Residues 20-104 form the SCAN box domain; the sequence is WHRFRRFHLG…LEELWGPAAS (85 aa). The disordered stretch occupies residues 101–171; the sequence is PAASPDGSSA…SPPLAPGLPA (71 aa). The segment covering 106-118 has biased composition (polar residues); sequence DGSSATRVPQDVT. Residues 134 to 148 show a composition bias toward low complexity; it reads PLAGTAPGAEGPAPG. 2 consecutive C2H2-type zinc fingers follow at residues 179 to 201 and 207 to 229; these read TSCP…RQSH and HACP…RDTH. A Glycyl lysine isopeptide (Lys-Gly) (interchain with G-Cter in SUMO2) cross-link involves residue lysine 190. A disordered region spans residues 220–243; it reads EHLRRHRDTHPGSPGSPGPALRPL. At serine 235 the chain carries Phosphoserine. 2 C2H2-type zinc fingers span residues 250 to 272 and 278 to 300; these read HACC…RKTH and FACW…QRIH. The span at 305-314 shows a compositional bias: low complexity; the sequence is ASAQGAVAPG. Residues 305–327 are disordered; the sequence is ASAQGAVAPGPDGGGPFPPWPLG.

This sequence belongs to the krueppel C2H2-type zinc-finger protein family.

Its subcellular location is the nucleus. Its function is as follows. Transcriptional regulator. Binds to the 5'-flanking critical region of the SCARF1 promoter. This chain is Zinc finger protein 444 (ZNF444), found in Homo sapiens (Human).